A 189-amino-acid polypeptide reads, in one-letter code: Peptidyl-tRNA hydrolase (189 aa).

Tyrosine 14 contributes to the tRNA binding site. Histidine 19 (proton acceptor) is an active-site residue. Residues tyrosine 64, asparagine 66, and asparagine 112 each coordinate tRNA.

The protein belongs to the PTH family. In terms of assembly, monomer.

It localises to the cytoplasm. The enzyme catalyses an N-acyl-L-alpha-aminoacyl-tRNA + H2O = an N-acyl-L-amino acid + a tRNA + H(+). Functionally, hydrolyzes ribosome-free peptidyl-tRNAs (with 1 or more amino acids incorporated), which drop off the ribosome during protein synthesis, or as a result of ribosome stalling. Its function is as follows. Catalyzes the release of premature peptidyl moieties from peptidyl-tRNA molecules trapped in stalled 50S ribosomal subunits, and thus maintains levels of free tRNAs and 50S ribosomes. The sequence is that of Peptidyl-tRNA hydrolase from Clostridium botulinum (strain Loch Maree / Type A3).